Consider the following 377-residue polypeptide: Dihydroorotate dehydrogenase (quinone) (377 aa).

FMN contacts are provided by residues 68–72 (AGFDK) and threonine 92. A substrate-binding site is contributed by lysine 72. 117–121 (NRMGF) lines the substrate pocket. FMN-binding residues include asparagine 149 and asparagine 182. Residue asparagine 182 participates in substrate binding. The active-site Nucleophile is the serine 185. Residue asparagine 187 coordinates substrate. FMN is bound by residues lysine 224 and threonine 252. 253–254 (NT) serves as a coordination point for substrate. FMN contacts are provided by residues glycine 278, glycine 307, and 328 to 329 (YT).

It belongs to the dihydroorotate dehydrogenase family. Type 2 subfamily. Monomer. Requires FMN as cofactor.

It localises to the cell membrane. It carries out the reaction (S)-dihydroorotate + a quinone = orotate + a quinol. It functions in the pathway pyrimidine metabolism; UMP biosynthesis via de novo pathway; orotate from (S)-dihydroorotate (quinone route): step 1/1. Functionally, catalyzes the conversion of dihydroorotate to orotate with quinone as electron acceptor. The sequence is that of Dihydroorotate dehydrogenase (quinone) from Thermobifida fusca (strain YX).